The sequence spans 432 residues: D-amino acid dehydrogenase 1 (432 aa).

Residue 3-17 (VLILGSGVVGTVSAY) coordinates FAD.

The protein belongs to the DadA oxidoreductase family. Requires FAD as cofactor.

The enzyme catalyses a D-alpha-amino acid + A + H2O = a 2-oxocarboxylate + AH2 + NH4(+). In terms of biological role, oxidative deamination of D-amino acids. The sequence is that of D-amino acid dehydrogenase 1 (dadA1) from Pseudomonas putida (strain ATCC 47054 / DSM 6125 / CFBP 8728 / NCIMB 11950 / KT2440).